The chain runs to 663 residues: Spore germination protein GerIA (663 aa).

Residues 1-13 (MIWNWLRKKKKSN) are compositionally biased toward basic residues. The interval 1–175 (MIWNWLRKKK…SGGNSIYDFT (175 aa)) is disordered. Basic and acidic residues predominate over residues 47–56 (KNNEQKDSSQ). Composition is skewed to low complexity over residues 57-72 (DKQQ…QDKQ), 88-101 (PKQG…QQSA), and 122-150 (DKQQ…QDKQ). Helical transmembrane passes span 414-434 (IFVD…DFFI), 451-471 (ILRL…VAVL), 491-511 (AQVP…IDLL), 541-561 (AGLT…ASFI), and 578-598 (FLAF…IFLF).

Belongs to the GerABKA family.

The protein localises to the cell membrane. Functionally, required for inosine germination. This is Spore germination protein GerIA (gerIA) from Bacillus cereus.